Reading from the N-terminus, the 201-residue chain is Probable cytokinin riboside 5'-monophosphate phosphoribohydrolase LOG6 (201 aa).

Substrate is bound by residues Glu-89, 107–108 (RK), 124–130 (GYGTLEE), and Thr-136.

The protein belongs to the LOG family.

The catalysed reaction is N(6)-(dimethylallyl)adenosine 5'-phosphate + H2O = N(6)-dimethylallyladenine + D-ribose 5-phosphate. It carries out the reaction 9-ribosyl-trans-zeatin 5'-phosphate + H2O = trans-zeatin + D-ribose 5-phosphate. Its function is as follows. Cytokinin-activating enzyme working in the direct activation pathway. Phosphoribohydrolase that converts inactive cytokinin nucleotides to the biologically active free-base forms. The sequence is that of Probable cytokinin riboside 5'-monophosphate phosphoribohydrolase LOG6 (LOG6) from Arabidopsis thaliana (Mouse-ear cress).